The primary structure comprises 324 residues: Fructose-1,6-bisphosphatase class 1 (324 aa).

Mg(2+) is bound by residues Glu-88, Asp-107, Leu-109, and Asp-110. Substrate is bound by residues 110-113 (DGSS), Asn-199, and Lys-265. Glu-271 contacts Mg(2+).

It belongs to the FBPase class 1 family. In terms of assembly, homotetramer. It depends on Mg(2+) as a cofactor.

The protein resides in the cytoplasm. It carries out the reaction beta-D-fructose 1,6-bisphosphate + H2O = beta-D-fructose 6-phosphate + phosphate. The protein operates within carbohydrate biosynthesis; gluconeogenesis. In Neisseria meningitidis serogroup A / serotype 4A (strain DSM 15465 / Z2491), this protein is Fructose-1,6-bisphosphatase class 1.